The primary structure comprises 1108 residues: Isoleucine--tRNA ligase (1108 aa).

Positions 53–63 match the 'HIGH' region motif; sequence PFANGLPHYGH. The 'KMSKS' region motif lies at 654–658; it reads KLSKR. ATP is bound at residue Lys657.

This sequence belongs to the class-I aminoacyl-tRNA synthetase family. IleS type 2 subfamily. In terms of assembly, monomer. Requires Zn(2+) as cofactor.

It is found in the cytoplasm. The catalysed reaction is tRNA(Ile) + L-isoleucine + ATP = L-isoleucyl-tRNA(Ile) + AMP + diphosphate. Catalyzes the attachment of isoleucine to tRNA(Ile). As IleRS can inadvertently accommodate and process structurally similar amino acids such as valine, to avoid such errors it has two additional distinct tRNA(Ile)-dependent editing activities. One activity is designated as 'pretransfer' editing and involves the hydrolysis of activated Val-AMP. The other activity is designated 'posttransfer' editing and involves deacylation of mischarged Val-tRNA(Ile). The chain is Isoleucine--tRNA ligase from Rickettsia bellii (strain RML369-C).